A 452-amino-acid chain; its full sequence is Bifunctional protein GlmU (452 aa).

The segment at 1 to 230 (MSRSRSAIIL…ADEVLGVNSR (230 aa)) is pyrophosphorylase. UDP-N-acetyl-alpha-D-glucosamine contacts are provided by residues 10 to 13 (LAAG), K24, Q75, and 80 to 81 (GT). D105 provides a ligand contact to Mg(2+). G141, E156, N171, and N228 together coordinate UDP-N-acetyl-alpha-D-glucosamine. Position 228 (N228) interacts with Mg(2+). Residues 231-251 (ADLAEAEAAFQSRMRQSMMAD) form a linker region. Positions 252 to 452 (GVTLIAPETV…ARKARKDSQT (201 aa)) are N-acetyltransferase. UDP-N-acetyl-alpha-D-glucosamine is bound by residues R317 and K335. The active-site Proton acceptor is H347. 2 residues coordinate UDP-N-acetyl-alpha-D-glucosamine: Y350 and N361. Residues A364, 370-371 (NY), S389, T407, and R424 each bind acetyl-CoA.

The protein in the N-terminal section; belongs to the N-acetylglucosamine-1-phosphate uridyltransferase family. This sequence in the C-terminal section; belongs to the transferase hexapeptide repeat family. As to quaternary structure, homotrimer. It depends on Mg(2+) as a cofactor.

It localises to the cytoplasm. The enzyme catalyses alpha-D-glucosamine 1-phosphate + acetyl-CoA = N-acetyl-alpha-D-glucosamine 1-phosphate + CoA + H(+). It catalyses the reaction N-acetyl-alpha-D-glucosamine 1-phosphate + UTP + H(+) = UDP-N-acetyl-alpha-D-glucosamine + diphosphate. The protein operates within nucleotide-sugar biosynthesis; UDP-N-acetyl-alpha-D-glucosamine biosynthesis; N-acetyl-alpha-D-glucosamine 1-phosphate from alpha-D-glucosamine 6-phosphate (route II): step 2/2. It participates in nucleotide-sugar biosynthesis; UDP-N-acetyl-alpha-D-glucosamine biosynthesis; UDP-N-acetyl-alpha-D-glucosamine from N-acetyl-alpha-D-glucosamine 1-phosphate: step 1/1. It functions in the pathway bacterial outer membrane biogenesis; LPS lipid A biosynthesis. In terms of biological role, catalyzes the last two sequential reactions in the de novo biosynthetic pathway for UDP-N-acetylglucosamine (UDP-GlcNAc). The C-terminal domain catalyzes the transfer of acetyl group from acetyl coenzyme A to glucosamine-1-phosphate (GlcN-1-P) to produce N-acetylglucosamine-1-phosphate (GlcNAc-1-P), which is converted into UDP-GlcNAc by the transfer of uridine 5-monophosphate (from uridine 5-triphosphate), a reaction catalyzed by the N-terminal domain. The sequence is that of Bifunctional protein GlmU from Maricaulis maris (strain MCS10) (Caulobacter maris).